Consider the following 103-residue polypeptide: GP16 protein (103 aa).

This is GP16 protein (GP16) from Orgyia pseudotsugata multicapsid polyhedrosis virus (OpMNPV).